The following is a 187-amino-acid chain: uncharacterized protein (187 aa).

The tract at residues 42–63 is disordered; sequence RTNGPGKDSFSFSTSGSKPSSS. Residues 50–63 show a composition bias toward low complexity; the sequence is SFSFSTSGSKPSSS.

This is an uncharacterized protein from Saccharomyces cerevisiae (strain ATCC 204508 / S288c) (Baker's yeast).